The sequence spans 469 residues: UDP-N-acetylmuramate--L-alanine ligase (469 aa).

An ATP-binding site is contributed by 112–118 (GTHGKTT).

It belongs to the MurCDEF family.

It localises to the cytoplasm. The catalysed reaction is UDP-N-acetyl-alpha-D-muramate + L-alanine + ATP = UDP-N-acetyl-alpha-D-muramoyl-L-alanine + ADP + phosphate + H(+). It functions in the pathway cell wall biogenesis; peptidoglycan biosynthesis. Functionally, cell wall formation. This is UDP-N-acetylmuramate--L-alanine ligase from Laribacter hongkongensis (strain HLHK9).